The following is a 334-amino-acid chain: Glyceraldehyde-3-phosphate dehydrogenase (334 aa).

Residues 11 to 12 (RI), Asp33, and Ser119 contribute to the NAD(+) site. Residues 149 to 151 (SCT) and Thr180 each bind D-glyceraldehyde 3-phosphate. Cys150 (nucleophile) is an active-site residue. Residue Asn181 participates in NAD(+) binding. Residues Arg197, 210-211 (TG), and Arg233 contribute to the D-glyceraldehyde 3-phosphate site. NAD(+) is bound at residue Asn314.

Belongs to the glyceraldehyde-3-phosphate dehydrogenase family. Homotetramer.

It is found in the cytoplasm. It catalyses the reaction D-glyceraldehyde 3-phosphate + phosphate + NAD(+) = (2R)-3-phospho-glyceroyl phosphate + NADH + H(+). Its pathway is carbohydrate degradation; glycolysis; pyruvate from D-glyceraldehyde 3-phosphate: step 1/5. Catalyzes the oxidative phosphorylation of glyceraldehyde 3-phosphate (G3P) to 1,3-bisphosphoglycerate (BPG) using the cofactor NAD. The first reaction step involves the formation of a hemiacetal intermediate between G3P and a cysteine residue, and this hemiacetal intermediate is then oxidized to a thioester, with concomitant reduction of NAD to NADH. The reduced NADH is then exchanged with the second NAD, and the thioester is attacked by a nucleophilic inorganic phosphate to produce BPG. The sequence is that of Glyceraldehyde-3-phosphate dehydrogenase (gap) from Clostridium acetobutylicum (strain ATCC 824 / DSM 792 / JCM 1419 / IAM 19013 / LMG 5710 / NBRC 13948 / NRRL B-527 / VKM B-1787 / 2291 / W).